Reading from the N-terminus, the 1002-residue chain is Mannan endo-1,4-beta-mannosidase (1002 aa).

An N-terminal signal peptide occupies residues 1–28 (MKTTVTKLLATVAAASTIFGMSTLPAFA). Positions 49 to 396 (AETRALFDKL…ADSNKNLMAS (348 aa)) constitute a GH26 domain. Histidine 144 provides a ligand contact to substrate. Glutamate 205 acts as the Proton donor in catalysis. Residues tryptophan 210 and tyrosine 278 each contribute to the substrate site. Residue glutamate 316 is the Nucleophile of the active site. Lysine 384 provides a ligand contact to substrate. CBM11 domains lie at 523 to 703 (VDNV…GKRD) and 717 to 897 (AKAQ…NEQT). Disordered stretches follow at residues 702 to 722 (RDAY…AQSV) and 888 to 969 (PAEN…LSRT). A compositionally biased stretch (polar residues) spans 707–719 (PNTNPTPGNTAKA). Basic and acidic residues-rich tracts occupy residues 897-913 (TPKD…KEQE) and 952-966 (PDTK…KDGL). The short motif at 966–970 (LSRTG) is the LPXTG sorting signal element. The residue at position 969 (threonine 969) is a Pentaglycyl murein peptidoglycan amidated threonine. Positions 970–1002 (GSNIISAIAAVAVLLLGGCAVLIARKRKGGDIE) are cleaved as a propeptide — removed by sortase.

The protein belongs to the glycosyl hydrolase 26 family. Homodimer.

It is found in the secreted. The protein resides in the cell wall. The enzyme catalyses Random hydrolysis of (1-&gt;4)-beta-D-mannosidic linkages in mannans, galactomannans and glucomannans.. In terms of biological role, beta-mannanase likely involved in the utilization of carbohydrates in the human gut. Catalyzes the hydrolysis of different beta-1,4-linked mannans, such as ivory nut mannan, konjac glucomannan, as well as carob and guar gum galactomannans, to a mixture of oligosaccharides. The dominant product from ivory nut mannan is found to be mannotriose; mannobiose and mannotetraose are produced to a lesser extent. Does not hydrolyze mannobiose, and hydrolyzes mannotriose at a significantly lower rate than the longer oligosaccharides. This is Mannan endo-1,4-beta-mannosidase from Bifidobacterium adolescentis (strain ATCC 15703 / DSM 20083 / NCTC 11814 / E194a).